Reading from the N-terminus, the 241-residue chain is Glucosamine-6-phosphate deaminase (241 aa).

The active-site Proton acceptor; for enolization step is Asp-67. Residue Asn-136 is the For ring-opening step of the active site. The active-site Proton acceptor; for ring-opening step is the His-138. The active-site For ring-opening step is Glu-143.

It belongs to the glucosamine/galactosamine-6-phosphate isomerase family. NagB subfamily.

It catalyses the reaction alpha-D-glucosamine 6-phosphate + H2O = beta-D-fructose 6-phosphate + NH4(+). The protein operates within amino-sugar metabolism; N-acetylneuraminate degradation; D-fructose 6-phosphate from N-acetylneuraminate: step 5/5. In terms of biological role, catalyzes the reversible isomerization-deamination of glucosamine 6-phosphate (GlcN6P) to form fructose 6-phosphate (Fru6P) and ammonium ion. The protein is Glucosamine-6-phosphate deaminase of Clostridium novyi (strain NT).